The chain runs to 658 residues: Probable mitochondrial Rho GTPase gemA (658 aa).

The Cytoplasmic portion of the chain corresponds to 1–633; sequence MKNNIKVILI…NGSNGSNNSN (633 aa). The 174-residue stretch at 2–175 folds into the Miro 1 domain; the sequence is KNNIKVILIG…LYASQTSVFF (174 aa). Residues 11–18, 57–62, and 118–121 contribute to the GTP site; these read GDEQVGKS, DTFDDG, and NKLD. 2 EF-hand domains span residues 191–226 and 311–346; these read GCER…CGHE and MGNE…TPKI. D204, D206, D208, S210, E215, D324, D326, D328, and D335 together coordinate Ca(2+). In terms of domain architecture, Miro 2 spans 420 to 616; that stretch reads RNIVNCYVFG…YHEMMETIVN (197 aa). Residues 429–436, 466–468, and 530–533 contribute to the GTP site; these read GAEAVGKT, LLK, and TKNN. The interval 532–575 is disordered; it reads NNNNNNNNNNNNNNNNNNNNLNNNNNNINNNNNNNNNNTTTTNA. Residues 634 to 656 traverse the membrane as a helical; Anchor for type IV membrane protein segment; sequence ILTYLVIAAGVAGVGLLLSKYLA. At 657–658 the chain is on the mitochondrial intermembrane side; that stretch reads KK.

This sequence belongs to the mitochondrial Rho GTPase family.

The protein localises to the mitochondrion outer membrane. In terms of biological role, mitochondrial GTPase involved in mitochondrial trafficking. Probably involved in control of anterograde transport of mitochondria and their subcellular distribution. This is Probable mitochondrial Rho GTPase gemA (gemA) from Dictyostelium discoideum (Social amoeba).